Reading from the N-terminus, the 209-residue chain is High-affinity nitrate transporter 3.2 (209 aa).

An N-terminal signal peptide occupies residues 1–22 (MAIHTLLFVSLLIFSLIESSSG). A helical transmembrane segment spans residues 177–197 (LDIASTFFSVFSVVSLFVFFV).

It belongs to the NAR2 family. Bearly detected in roots and shoots.

The protein localises to the cell membrane. In terms of biological role, acts as a dual component transporter with NTR2.1. Required for high-affinity nitrate transport. This chain is High-affinity nitrate transporter 3.2, found in Arabidopsis thaliana (Mouse-ear cress).